Reading from the N-terminus, the 87-residue chain is Small archaeal modifier protein 1 (87 aa).

G87 is subject to 1-thioglycine; alternate. G87 bears the Glycyl adenylate; alternate mark. G87 participates in a covalent cross-link: Glycyl lysine isopeptide (Gly-Lys) (interchain with K-? in acceptor proteins); alternate.

Post-translationally, the C-terminal glycine is likely acyl-adenylated (-COAMP) by UbaA, and also probably thiocarboxylated (-COSH) to function in sulfur transfer.

Its function is as follows. Functions as a protein modifier covalently attached to lysine residues of substrate proteins, as well as a sulfur carrier in molybdenum cofactor (MoCo) biosynthesis. The protein modification process is termed sampylation and involves the formation of an isopeptide bond between the SAMP1 C-terminal glycine carboxylate and the epsilon-amino group of lysine residues on target proteins. May serve as a proteolytic signal in the cell to target proteins for degradation by proteasomes. This Haloferax volcanii (strain ATCC 29605 / DSM 3757 / JCM 8879 / NBRC 14742 / NCIMB 2012 / VKM B-1768 / DS2) (Halobacterium volcanii) protein is Small archaeal modifier protein 1 (samp1).